A 903-amino-acid chain; its full sequence is DNA-directed DNA polymerase (903 aa).

The segment at 103–340 (YDHTKIRVAN…VLQIDAKRQF (238 aa)) is 3'-5'exonuclease. 3 residues coordinate Mg(2+): aspartate 114, glutamate 116, and aspartate 222. The tract at residues 248–264 (TRVKVIENMYGSREIIT) is beta hairpin. Mg(2+)-binding residues include aspartate 327, aspartate 411, and leucine 412. The polymerase stretch occupies residues 380 to 903 (IPQGRSHPVQ…KASLFDMFDF (524 aa)). Residues 414–416 (SLY), arginine 482, and lysine 560 each bind substrate. Aspartate 623 lines the Mg(2+) pocket. Residues 705–708 (KKRY) form a binding of DNA in B-conformation region. Positions 897-903 (LFDMFDF) are interaction with the polymerase clamp.

This sequence belongs to the DNA polymerase type-B family. As to quaternary structure, part of the replicase complex that includes the DNA polymerase, the polymerase clamp, the clamp loader complex, the single-stranded DNA binding protein, and the primase/helicase. Interacts with the polymerase clamp; this interaction constitutes the polymerase holoenzyme. It depends on Mg(2+) as a cofactor.

It catalyses the reaction DNA(n) + a 2'-deoxyribonucleoside 5'-triphosphate = DNA(n+1) + diphosphate. Functionally, replicates the viral genomic DNA. This polymerase possesses two enzymatic activities: DNA synthesis (polymerase) and an exonucleolytic activity that degrades single-stranded DNA in the 3'- to 5'-direction for proofreading purpose. The sequence is that of DNA-directed DNA polymerase (43) from Escherichia coli (Bacteriophage RB69).